Consider the following 265-residue polypeptide: Glutamate racemase (265 aa).

Substrate is bound by residues 7–8 (DS) and 39–40 (YG). The active-site Proton donor/acceptor is cysteine 70. Position 71-72 (71-72 (NT)) interacts with substrate. Residue cysteine 182 is the Proton donor/acceptor of the active site. 183–184 (TH) contributes to the substrate binding site.

It belongs to the aspartate/glutamate racemases family.

It carries out the reaction L-glutamate = D-glutamate. Its pathway is cell wall biogenesis; peptidoglycan biosynthesis. Provides the (R)-glutamate required for cell wall biosynthesis. This is Glutamate racemase from Lachnospira eligens (strain ATCC 27750 / DSM 3376 / VPI C15-48 / C15-B4) (Eubacterium eligens).